The chain runs to 165 residues: Adenosine 5'-monophosphoramidase HINT3 (165 aa).

Residues 1–23 (MAEKQAGLVGEPDPEGSSPGTSE) form a disordered region. Position 2 is an N-acetylalanine (Ala2). Residues 32–143 (VFCRVAAGQE…PVKEFGFLSK (112 aa)) enclose the HIT domain. Residues 59–60 (DI) and 128–130 (HLH) each bind AMP. Positions 126 to 130 (HLHLH) match the Histidine triad motif motif. His128 serves as the catalytic Tele-AMP-histidine intermediate.

This sequence belongs to the HINT family. As to quaternary structure, forms dimers to octamers and even larger oligomer. Interacts with CALM1.

The protein resides in the cytoplasm. It is found in the nucleus. It carries out the reaction adenosine 5'-phosphoramidate + H2O = AMP + NH4(+). Exhibits adenosine 5'-monophosphoramidase activity, hydrolyzing purine nucleotide phosphoramidates with a single phosphate group such as adenosine 5'monophosphoramidate (AMP-NH2) to yield AMP and NH2. Hydrolyzes lysyl-AMP (AMP-N-epsilon-(N-alpha-acetyl lysine methyl ester)) generated by lysine tRNA ligase. This chain is Adenosine 5'-monophosphoramidase HINT3 (Hint3), found in Mus musculus (Mouse).